The chain runs to 211 residues: FMN-dependent NADH:quinone oxidoreductase 2 (211 aa).

Residues Ser10 and 17 to 19 each bind FMN; that span reads SRS.

This sequence belongs to the azoreductase type 1 family. Homodimer. It depends on FMN as a cofactor.

The enzyme catalyses 2 a quinone + NADH + H(+) = 2 a 1,4-benzosemiquinone + NAD(+). It carries out the reaction N,N-dimethyl-1,4-phenylenediamine + anthranilate + 2 NAD(+) = 2-(4-dimethylaminophenyl)diazenylbenzoate + 2 NADH + 2 H(+). In terms of biological role, quinone reductase that provides resistance to thiol-specific stress caused by electrophilic quinones. Also exhibits azoreductase activity. Catalyzes the reductive cleavage of the azo bond in aromatic azo compounds to the corresponding amines. This chain is FMN-dependent NADH:quinone oxidoreductase 2, found in Listeria monocytogenes serovar 1/2a (strain ATCC BAA-679 / EGD-e).